The following is a 637-amino-acid chain: Chaperone protein HtpG (637 aa).

An a; substrate-binding region spans residues 1 to 345; it reads MSQQETHGFQ…SNDLPLNVSR (345 aa). The b stretch occupies residues 346 to 562; it reads EILQDNHITK…EGEMSSQMIK (217 aa). The interval 563 to 637 is c; that stretch reads LMQAAGQPVP…MNQMLLANLK (75 aa).

The protein belongs to the heat shock protein 90 family. Homodimer.

The protein resides in the cytoplasm. Molecular chaperone. Has ATPase activity. The chain is Chaperone protein HtpG from Shewanella sp. (strain MR-7).